A 225-amino-acid chain; its full sequence is Thymidylate kinase (225 aa).

Residue 12–19 (GGEGAGKS) participates in ATP binding.

Belongs to the thymidylate kinase family.

The catalysed reaction is dTMP + ATP = dTDP + ADP. Phosphorylation of dTMP to form dTDP in both de novo and salvage pathways of dTTP synthesis. The protein is Thymidylate kinase of Chelativorans sp. (strain BNC1).